Here is a 259-residue protein sequence, read N- to C-terminus: 5'-nucleotidase SurE (259 aa).

4 residues coordinate a divalent metal cation: aspartate 8, aspartate 9, serine 40, and asparagine 92.

It belongs to the SurE nucleotidase family. A divalent metal cation is required as a cofactor.

The protein localises to the cytoplasm. The catalysed reaction is a ribonucleoside 5'-phosphate + H2O = a ribonucleoside + phosphate. In terms of biological role, nucleotidase that shows phosphatase activity on nucleoside 5'-monophosphates. This Stenotrophomonas maltophilia (strain R551-3) protein is 5'-nucleotidase SurE.